Consider the following 364-residue polypeptide: tRNA-specific 2-thiouridylase MnmA (364 aa).

Residues G13–S20 and M39 contribute to the ATP site. Positions N99–D101 are interaction with target base in tRNA. The active-site Nucleophile is the C104. The cysteines at positions 104 and 200 are disulfide-linked. G128 is an ATP binding site. An interaction with tRNA region spans residues K150–Q152. C200 functions as the Cysteine persulfide intermediate in the catalytic mechanism. An interaction with tRNA region spans residues R310–Y311.

It belongs to the MnmA/TRMU family.

It localises to the cytoplasm. It carries out the reaction S-sulfanyl-L-cysteinyl-[protein] + uridine(34) in tRNA + AH2 + ATP = 2-thiouridine(34) in tRNA + L-cysteinyl-[protein] + A + AMP + diphosphate + H(+). Its function is as follows. Catalyzes the 2-thiolation of uridine at the wobble position (U34) of tRNA, leading to the formation of s(2)U34. The protein is tRNA-specific 2-thiouridylase MnmA of Alkaliphilus oremlandii (strain OhILAs) (Clostridium oremlandii (strain OhILAs)).